The chain runs to 73 residues: Protein SlyX homolog (73 aa).

The protein belongs to the SlyX family.

The sequence is that of Protein SlyX homolog from Haemophilus influenzae (strain PittEE).